The primary structure comprises 295 residues: Sulfotransferase 1A1 (295 aa).

48-53 (KSGTTW) contacts 3'-phosphoadenylyl sulfate. 106-108 (KTH) is a substrate binding site. His108 serves as the catalytic Proton acceptor. Residues Arg130, Ser138, Tyr193, 227 to 232 (TSFKEM), and 255 to 259 (FMRKG) each bind 3'-phosphoadenylyl sulfate. A Phosphoserine modification is found at Ser138.

It belongs to the sulfotransferase 1 family. In terms of assembly, homodimer.

Its subcellular location is the cytoplasm. It carries out the reaction a phenol + 3'-phosphoadenylyl sulfate = an aryl sulfate + adenosine 3',5'-bisphosphate + H(+). The catalysed reaction is 17beta-estradiol + 3'-phosphoadenylyl sulfate = 17beta-estradiol 3-sulfate + adenosine 3',5'-bisphosphate + H(+). The enzyme catalyses 4-ethylphenol + 3'-phosphoadenylyl sulfate = 4-ethylphenyl sulfate + adenosine 3',5'-bisphosphate + H(+). It catalyses the reaction 4-nitrophenol + 3'-phosphoadenylyl sulfate = 4-nitrophenyl sulfate + adenosine 3',5'-bisphosphate. It carries out the reaction dopamine + 3'-phosphoadenylyl sulfate = dopamine 3-O-sulfate + adenosine 3',5'-bisphosphate + H(+). The catalysed reaction is dopamine + 3'-phosphoadenylyl sulfate = dopamine 4-O-sulfate + adenosine 3',5'-bisphosphate + H(+). The enzyme catalyses 3,3',5-triiodo-L-thyronine + 3'-phosphoadenylyl sulfate = 3,3',5-triiodo-L-thyronine sulfate + adenosine 3',5'-bisphosphate + H(+). It catalyses the reaction 3,3',5'-triiodo-L-thyronine + 3'-phosphoadenylyl sulfate = 3,3',5'-triiodo-L-thyronine sulfate + adenosine 3',5'-bisphosphate + H(+). It carries out the reaction 3,3'-diiodo-L-thyronine + 3'-phosphoadenylyl sulfate = 3,3'-diiodo-L-thyronine sulfate + adenosine 3',5'-bisphosphate + H(+). The catalysed reaction is L-thyroxine + 3'-phosphoadenylyl sulfate = L-thyroxine sulfate + adenosine 3',5'-bisphosphate + H(+). Functionally, sulfotransferase that utilizes 3'-phospho-5'-adenylyl sulfate (PAPS) as sulfonate donor to catalyze the sulfate conjugation of a wide variety of acceptor molecules bearing a hydroxyl or an amine group. Sulfonation increases the water solubility of most compounds, and therefore their renal excretion, but it can also result in bioactivation to form active metabolites. Displays broad substrate specificity for small phenolic compounds. Plays an important role in the sulfonation of endogenous molecules such as steroid hormones. Mediates also the metabolic activation of carcinogenic N-hydroxyarylamines leading to highly reactive intermediates capable of forming DNA adducts, potentially resulting in mutagenesis. May play a role in gut microbiota-host metabolic interaction. O-sulfonates 4-ethylphenol (4-EP), a dietary tyrosine-derived metabolite produced by gut bacteria. The product 4-EPS crosses the blood-brain barrier and may negatively regulate oligodendrocyte maturation and myelination, affecting the functional connectivity of different brain regions associated with the limbic system. Catalyzes the sulfate conjugation of dopamine. Catalyzes the sulfation of T4 (L-thyroxine/3,5,3',5'-tetraiodothyronine), T3 (3,5,3'-triiodothyronine), rT3 (3,3',5'-triiodothyronine) and 3,3'-T2 (3,3'-diiodothyronine), with a substrate preference of 3,3'-T2 &gt; rT3 &gt; T3 &gt; T4. This is Sulfotransferase 1A1 (SULT1A1) from Macaca fascicularis (Crab-eating macaque).